A 115-amino-acid chain; its full sequence is Large ribosomal subunit protein bL20 (115 aa).

Belongs to the bacterial ribosomal protein bL20 family.

Binds directly to 23S ribosomal RNA and is necessary for the in vitro assembly process of the 50S ribosomal subunit. It is not involved in the protein synthesizing functions of that subunit. This is Large ribosomal subunit protein bL20 from Synechococcus sp. (strain CC9902).